The chain runs to 259 residues: Ferritin-3, chloroplastic (259 aa).

A chloroplast-targeting transit peptide spans 1–49 (MLLKAASTFSLLNIHGEKKDISPLFSSSSSISSPVSSGKSGNLSFPLRA). The tract at residues 50 to 88 (SKSSTTTTSTLSGVVFEPFEEVKKEMDLVPSGQQLSLAR) is extension peptide (EP). The Ferritin-like diiron domain occupies 89 to 242 (HLYSPECEAA…EYVSQLRRLG (154 aa)). 5 residues coordinate Fe cation: E106, E141, H144, E190, and Q224.

It belongs to the ferritin family. As to quaternary structure, oligomer of 24 subunits. There are two types of subunits: L (light) chain and H (heavy) chain. The major chain can be light or heavy, depending on the species and tissue type. The functional molecule forms a roughly spherical shell with a diameter of 12 nm and contains a central cavity into which the insoluble mineral iron core is deposited.

It localises to the plastid. The protein localises to the chloroplast. It carries out the reaction 4 Fe(2+) + O2 + 4 H(+) = 4 Fe(3+) + 2 H2O. Its function is as follows. Stores iron in a soluble, non-toxic, readily available form. Important for iron homeostasis. Has ferroxidase activity. Iron is taken up in the ferrous form and deposited as ferric hydroxides after oxidation. In Arabidopsis thaliana (Mouse-ear cress), this protein is Ferritin-3, chloroplastic (FER3).